The sequence spans 631 residues: MYPLGRVSLPVRSPVCLFCQNRTSSLLPSAYVWQSARTMASGRLRRKAARMALSPNVAKTSLKKKRNDTDRFGPFAGMNQTEARIRDDPRSRSPASLKRSKAPSDESGRKDSELYKALKMQTALAPIPYGRRSAIKAKIAEITSFDQFPLLPVVRHSIFSQALPGLHDVTPTPIQRVAIPRLLDDTNKDKKPKKRAEGEPEYDQYLLAAETGSGKTLAYLIPLVNTVKQQEAIEKEEQKREEEEKAKEREEKLKNQAFDVEPELPPLSNAGRPRVIILVPTAELVAQVGAKVKTLSHTIKYRSGMISSNLTPRRIKNTLFNPDGIDILVTTPHLLASIAKTEPYVLSRVSHLVLDEADSLLDRSFQPITTEIIEKTSGSLQKLILCSATIPRSLDNFLRKKYPDIQRLTTPNLHAIPRRVQLGVVDIQKDPYRGNRNLACADVIWSIGKAGDSEPAGPFASYQGPSVKKILVFVNEREEADEVAQFLRSKGIDAHSLSRDSSARRQEEILAEFTEAGAPPSSEEIMLAQKKGRQDDAIPFEAPSKPHEPHKLPNTKVLVTTDIASRGIDTLAVKTVILYHVPHTTIDFIHRLGRLGRMNKRGRGIVLVGKKDRKDVVKEVREGMFRGQALI.

The transit peptide at 1-39 directs the protein to the mitochondrion; it reads MYPLGRVSLPVRSPVCLFCQNRTSSLLPSAYVWQSARTM. The disordered stretch occupies residues 55–111; the sequence is PNVAKTSLKKKRNDTDRFGPFAGMNQTEARIRDDPRSRSPASLKRSKAPSDESGRKD. Basic and acidic residues predominate over residues 102–111; that stretch reads APSDESGRKD. The Q motif motif lies at 143–176; that stretch reads TSFDQFPLLPVVRHSIFSQALPGLHDVTPTPIQR. Residues 181–200 form a disordered region; that stretch reads RLLDDTNKDKKPKKRAEGEP. One can recognise a Helicase ATP-binding domain in the interval 196–408; it reads AEGEPEYDQY…RKKYPDIQRL (213 aa). 209 to 216 contacts ATP; it reads AETGSGKT. The short motif at 355 to 358 is the DEAD box element; the sequence is DEAD. One can recognise a Helicase C-terminal domain in the interval 442–631; it reads DVIWSIGKAG…EGMFRGQALI (190 aa).

The protein belongs to the DEAD box helicase family. MRH4 subfamily.

The protein localises to the mitochondrion. The enzyme catalyses ATP + H2O = ADP + phosphate + H(+). ATP-binding RNA helicase involved in mitochondrial RNA metabolism. Required for maintenance of mitochondrial DNA. This is ATP-dependent RNA helicase mrh4, mitochondrial (mrh4) from Aspergillus terreus (strain NIH 2624 / FGSC A1156).